The chain runs to 239 residues: Aspartate/glutamate leucyltransferase (239 aa).

This sequence belongs to the R-transferase family. Bpt subfamily.

Its subcellular location is the cytoplasm. The catalysed reaction is N-terminal L-glutamyl-[protein] + L-leucyl-tRNA(Leu) = N-terminal L-leucyl-L-glutamyl-[protein] + tRNA(Leu) + H(+). The enzyme catalyses N-terminal L-aspartyl-[protein] + L-leucyl-tRNA(Leu) = N-terminal L-leucyl-L-aspartyl-[protein] + tRNA(Leu) + H(+). Functionally, functions in the N-end rule pathway of protein degradation where it conjugates Leu from its aminoacyl-tRNA to the N-termini of proteins containing an N-terminal aspartate or glutamate. This chain is Aspartate/glutamate leucyltransferase, found in Campylobacter jejuni (strain RM1221).